A 579-amino-acid polypeptide reads, in one-letter code: Arginine--tRNA ligase (579 aa).

Residues 128–138 carry the 'HIGH' region motif; that stretch reads PNLAKEMHVGH.

This sequence belongs to the class-I aminoacyl-tRNA synthetase family. In terms of assembly, monomer.

The protein localises to the cytoplasm. It carries out the reaction tRNA(Arg) + L-arginine + ATP = L-arginyl-tRNA(Arg) + AMP + diphosphate. In Pseudomonas syringae pv. syringae (strain B728a), this protein is Arginine--tRNA ligase.